A 466-amino-acid chain; its full sequence is Purple acid phosphatase 25 (466 aa).

A signal peptide spans M1–S21. D164 is a binding site for Fe cation. N172 carries an N-linked (GlcNAc...) asparagine glycan. Positions 192 and 195 each coordinate Fe cation. Position 192 (D192) interacts with Zn(2+). The Zn(2+) site is built by N229 and H314. Substrate is bound at residue N229. The active-site Proton donor is H324. H351 serves as a coordination point for Zn(2+). H351–H353 serves as a coordination point for substrate. A Fe cation-binding site is contributed by H353. N367 and N424 each carry an N-linked (GlcNAc...) asparagine glycan.

Belongs to the metallophosphoesterase superfamily. Purple acid phosphatase family. Homodimer. Fe cation is required as a cofactor. Requires Zn(2+) as cofactor. In terms of tissue distribution, specifically expressed in flowers.

It is found in the secreted. It carries out the reaction a phosphate monoester + H2O = an alcohol + phosphate. The sequence is that of Purple acid phosphatase 25 (PAP25) from Arabidopsis thaliana (Mouse-ear cress).